We begin with the raw amino-acid sequence, 602 residues long: Glutaminase liver isoform, mitochondrial (602 aa).

The N-terminal 14 residues, 1–14 (MRSMRALQNALSRA), are a transit peptide targeting the mitochondrion. Disordered stretches follow at residues 1-28 (MRSMRALQNALSRAGSHGQRGGWGHPSR) and 46-67 (QGRGTPHSHQPQHSDHDASNSG). Ser219 contributes to the substrate binding site. Position 253 is an N6-succinyllysine (Lys253). Asn268 is a substrate binding site. Lys279 and Lys284 each carry N6-acetyllysine. Positions 314 and 321 each coordinate substrate. At Lys329 the chain carries N6-acetyllysine. Residues Tyr347, Tyr399, and Val417 each contribute to the substrate site. 2 ANK repeats span residues 518–551 (DSRTALHVAAAEGHIDVVKFLIEACKVNPFVKDR) and 552–585 (WGNIPLDDAVQFNHLEVVKLLQDYHDSYMLSETQ).

This sequence belongs to the glutaminase family. As to quaternary structure, homotetramer, dimer of dimers. Does not assemble into higher oligomers. Interacts with the PDZ domain of the syntrophin SNTA1. Interacts with the PDZ domain of TAX1BP3. In terms of tissue distribution, liver specific.

The protein resides in the mitochondrion. It catalyses the reaction L-glutamine + H2O = L-glutamate + NH4(+). Functionally, plays an important role in the regulation of glutamine catabolism. Promotes mitochondrial respiration and increases ATP generation in cells by catalyzing the synthesis of glutamate and alpha-ketoglutarate. Increases cellular anti-oxidant function via NADH and glutathione production. May play a role in preventing tumor proliferation. In Rattus norvegicus (Rat), this protein is Glutaminase liver isoform, mitochondrial (Gls2).